The primary structure comprises 156 residues: Neuroactive polyprotein R15 (156 aa).

A signal peptide spans M1 to L26. The propeptide occupies P27–S48. The cysteines at positions 74 and 81 are disulfide-linked. Q120 bears the Pyrrolidone carboxylic acid mark.

Expressed within the abdominal ganglion in neurons R15, RB(HE), the two L9(G) gill motoneurons, and L40 interneuron, all are parts of autonomic control circuit that contributes to implementing a central command to coordinate autonomic activity with escape locomotion.

The protein resides in the secreted. In terms of biological role, the alpha-1 peptide acts as an osmoregulatory peptide, increasing blood volume, and also modulates the activity of a set of cardiac motor neurons that control heart rate. The chain is Neuroactive polyprotein R15 from Aplysia californica (California sea hare).